A 232-amino-acid polypeptide reads, in one-letter code: SLYDIAPVTPGVAVDLSHIPTDVKIKGFSGEDATPALEGADVVLISAGVARKPGMDRSDLFNVNAGIVKNLVQQIAKTCPQACIGVITNPVNTTVAIAAEVLKKAGVYDKNKLFGVTTLDIIRSNTFVAELKGKSATEVEVPVIGGHSGVTILPLLSQIPGVSFSDQEVADLTKRIQNAGTEVVEAKAGGGSATLSMGQAAARFGLSLVRAMQGEKGVVECAYVEGDGHYAR.

Asp4 is a binding site for NAD(+). Substrate contacts are provided by Arg51 and Arg57. Residues Asn64 and 87–89 (ITN) each bind NAD(+). Substrate is bound by residues Asn89 and Arg123. The active-site Proton acceptor is His147. Met197 serves as a coordination point for NAD(+).

This sequence belongs to the LDH/MDH superfamily. MDH type 1 family. Homodimer.

The enzyme catalyses (S)-malate + NAD(+) = oxaloacetate + NADH + H(+). Its function is as follows. Catalyzes the reversible oxidation of malate to oxaloacetate. This is Malate dehydrogenase (mdh) from Klebsiella variicola.